Here is an 848-residue protein sequence, read N- to C-terminus: DNA mismatch repair protein MutS (848 aa).

605–612 (GPNMAGKS) is an ATP binding site.

This sequence belongs to the DNA mismatch repair MutS family.

Its function is as follows. This protein is involved in the repair of mismatches in DNA. It is possible that it carries out the mismatch recognition step. This protein has a weak ATPase activity. This chain is DNA mismatch repair protein MutS, found in Leptospira interrogans serogroup Icterohaemorrhagiae serovar copenhageni (strain Fiocruz L1-130).